Reading from the N-terminus, the 96-residue chain is Protein Vpr (96 aa).

Residues 1-42 form a homooligomerization region; it reads MEQAPEDQGPQREPYNEWTIEILEELKREAVRHFPRPWLHDL. A phosphoserine; by host mark is found at serine 79, serine 94, and serine 96.

Belongs to the HIV-1 VPR protein family. In terms of assembly, homooligomer, may form homodimer. Interacts with p6-gag region of the Pr55 Gag precursor protein through a (Leu-X-X)4 motif near the C-terminus of the P6gag protein. Interacts with host UNG. May interact with host RAD23A/HHR23A. Interacts with host VPRBP/DCAF1, leading to hijack the CUL4A-RBX1-DDB1-DCAF1/VPRBP complex, mediating ubiquitination of host proteins such as TERT and ZGPAT and arrest of the cell cycle in G2 phase. In terms of processing, phosphorylated on several residues by host. These phosphorylations regulate VPR activity for the nuclear import of the HIV-1 pre-integration complex.

The protein localises to the virion. Its subcellular location is the host nucleus. The protein resides in the host extracellular space. In terms of biological role, during virus replication, may deplete host UNG protein, and incude G2-M cell cycle arrest. Acts by targeting specific host proteins for degradation by the 26S proteasome, through association with the cellular CUL4A-DDB1 E3 ligase complex by direct interaction with host VPRPB/DCAF-1. Cell cycle arrest reportedly occurs within hours of infection and is not blocked by antiviral agents, suggesting that it is initiated by the VPR carried into the virion. Additionally, VPR induces apoptosis in a cell cycle dependent manner suggesting that these two effects are mechanistically linked. Detected in the serum and cerebrospinal fluid of AIDS patient, VPR may also induce cell death to bystander cells. During virus entry, plays a role in the transport of the viral pre-integration (PIC) complex to the host nucleus. This function is crucial for viral infection of non-dividing macrophages. May act directly at the nuclear pore complex, by binding nucleoporins phenylalanine-glycine (FG)-repeat regions. This Human immunodeficiency virus type 1 group M subtype K (isolate 97ZR-EQTB11) (HIV-1) protein is Protein Vpr.